Here is a 968-residue protein sequence, read N- to C-terminus: 5'-3' exoribonuclease 2 (968 aa).

Coiled coils occupy residues 113–140 and 387–416; these read RFRAAKDAELKAKQLEIEVQERELRGEI and KNKHAAEQRREENNKRRKLAQEQERALKRV. Residues 498–510 are compositionally biased toward low complexity; it reads TDSSANSETTTSE. 2 disordered regions span residues 498-538 and 873-968; these read TDSS…QSDD and LTNG…RPQR. A compositionally biased stretch (basic and acidic residues) spans 521-538; it reads SLKRKLEPEEDKQTQSDD. Polar residues predominate over residues 882 to 893; it reads QSQNSQYLSYGQ. The span at 902 to 959 shows a compositional bias: low complexity; that stretch reads SYNQQGYYNQQGRYNQQGNNYNQQGRYSQQSQYNQYRSNTQRFNNNQNYNQSSNNSRS.

The protein belongs to the 5'-3' exonuclease family. XRN2/RAT1 subfamily. In terms of assembly, interacts with RAI1; the interaction is direct, stabilizes RAT1 protein structure and may stimulate its exoribonuclease activity. The interaction also stimulates RAI1 pyrophosphohydrolase activity, probably by recruiting it to mRNA substrates.

It localises to the nucleus. Possesses 5'-&gt;3' exoribonuclease activity. Required for the processing of nuclear mRNA and rRNA precursors. May promote the termination of transcription by RNA polymerase II. Essential for vegetative cell growth and chromosome segregation. In Candida albicans (strain SC5314 / ATCC MYA-2876) (Yeast), this protein is 5'-3' exoribonuclease 2 (RAT1).